The sequence spans 153 residues: Ribosomal RNA large subunit methyltransferase H (153 aa).

S-adenosyl-L-methionine-binding positions include leucine 75, glycine 102, and leucine 121–leucine 126.

Belongs to the RNA methyltransferase RlmH family. As to quaternary structure, homodimer.

It localises to the cytoplasm. It carries out the reaction pseudouridine(1915) in 23S rRNA + S-adenosyl-L-methionine = N(3)-methylpseudouridine(1915) in 23S rRNA + S-adenosyl-L-homocysteine + H(+). Functionally, specifically methylates the pseudouridine at position 1915 (m3Psi1915) in 23S rRNA. This Campylobacter jejuni (strain RM1221) protein is Ribosomal RNA large subunit methyltransferase H.